The sequence spans 941 residues: Pre-mRNA-processing factor 6 (941 aa).

Residues 1-79 are disordered; sequence MNKKKKPFLG…DEDLNDTNYD (79 aa). Over residues 39–65 the composition is skewed to basic and acidic residues; the sequence is DANDPVDDRHAPPGKRTVGDQMKKNQA. Residues 66–78 are compositionally biased toward acidic residues; it reads ADDDDEDLNDTNY. A Phosphoserine modification is found at serine 143. Threonine 180, threonine 266, and threonine 275 each carry phosphothreonine. A Phosphoserine modification is found at serine 279. HAT repeat units lie at residues 384-416, 418-444, 445-476, 554-586, 588-620, 622-654, 689-721, 723-755, and 855-887; these read TDIR…LEEP, DARI…ARLE, TYEN…LEEA, NALE…FEKN, GTRE…SKWL, GDVP…LESE, GNIS…IEEQ, ELME…LEEK, and RKIT…FELQ.

In terms of assembly, identified in the spliceosome B complex. Identified in the spliceosome C complex. Associates with the U5 snRNP particle. Component of the U4/U6-U5 tri-snRNP complex composed of the U4, U6 and U5 snRNAs and at least PRPF3, PRPF4, PRPF6, PRPF8, PRPF31, SNRNP200, TXNL4A, SNRNP40, DDX23, CD2BP2, PPIH, SNU13, EFTUD2, SART1 and USP39, LSm proteins LSm2-8 and Sm proteins. Interacts with ARAF1. Interacts with AR and NR3C1, but not ESR1, independently of the presence of hormones. Interacts with USH1G. Phosphorylated by PRP4K during spliceosome assembly.

It is found in the nucleus. The protein resides in the nucleoplasm. It localises to the nucleus speckle. Its function is as follows. Involved in pre-mRNA splicing as component of the U4/U6-U5 tri-snRNP complex, one of the building blocks of the spliceosome. Enhances dihydrotestosterone-induced transactivation activity of AR, as well as dexamethasone-induced transactivation activity of NR3C1, but does not affect estrogen-induced transactivation. This is Pre-mRNA-processing factor 6 (Prpf6) from Mus musculus (Mouse).